The sequence spans 361 residues: Uroporphyrinogen decarboxylase (361 aa).

Residues 27–31 (RQAGR), Asp-77, Tyr-154, Thr-209, and His-327 each bind substrate.

Belongs to the uroporphyrinogen decarboxylase family. In terms of assembly, homodimer.

It is found in the cytoplasm. The catalysed reaction is uroporphyrinogen III + 4 H(+) = coproporphyrinogen III + 4 CO2. It functions in the pathway porphyrin-containing compound metabolism; protoporphyrin-IX biosynthesis; coproporphyrinogen-III from 5-aminolevulinate: step 4/4. Functionally, catalyzes the decarboxylation of four acetate groups of uroporphyrinogen-III to yield coproporphyrinogen-III. This Coxiella burnetii (strain Dugway 5J108-111) protein is Uroporphyrinogen decarboxylase.